The chain runs to 431 residues: Glucose-1-phosphate adenylyltransferase (431 aa).

Position 39 (Lys39) interacts with beta-D-fructose 1,6-bisphosphate. Residues Arg40, His46, and Arg52 each coordinate AMP. Tyr114 contributes to the alpha-D-glucose 1-phosphate binding site. Residue Arg130 coordinates AMP. Residues Gly179, 194–195 (EK), and Ser212 contribute to the alpha-D-glucose 1-phosphate site. Arg386 is a binding site for AMP. A beta-D-fructose 1,6-bisphosphate-binding site is contributed by 429-431 (QER).

The protein belongs to the bacterial/plant glucose-1-phosphate adenylyltransferase family. As to quaternary structure, homotetramer.

It carries out the reaction alpha-D-glucose 1-phosphate + ATP + H(+) = ADP-alpha-D-glucose + diphosphate. The protein operates within glycan biosynthesis; glycogen biosynthesis. With respect to regulation, allosterically activated by fructose-1,6-bisphosphate (F16BP) and inhibited by AMP. Involved in the biosynthesis of ADP-glucose, a building block required for the elongation reactions to produce glycogen. Catalyzes the reaction between ATP and alpha-D-glucose 1-phosphate (G1P) to produce pyrophosphate and ADP-Glc. The polypeptide is Glucose-1-phosphate adenylyltransferase (Klebsiella pneumoniae subsp. pneumoniae (strain ATCC 700721 / MGH 78578)).